Here is a 163-residue protein sequence, read N- to C-terminus: Probable RNA-binding protein EIF1AD (163 aa).

One can recognise an S1-like domain in the interval 18–96; it reads MMEDDYELPT…VKAEISKILT (79 aa). The interval 106-163 is disordered; the sequence is AGIWPERFAKNPPQEAKAQNDDEDSDFEDDLTPNTNRPVQESDEEDEDTDTESSDEED. 2 stretches are compositionally biased toward acidic residues: residues 126 to 136 and 146 to 163; these read DDEDSDFEDDL and ESDE…DEED.

This sequence belongs to the EIF1AD family.

The sequence is that of Probable RNA-binding protein EIF1AD from Drosophila pseudoobscura pseudoobscura (Fruit fly).